The chain runs to 362 residues: Serine/threonine-protein kinase ZRK4 (362 aa).

The segment at 1 to 23 (MNDQKMSCWRKKSKKKNSEANQR) is disordered. Residues 35–362 (LEDLIELCNG…KELKRIERWT (328 aa)) enclose the Protein kinase domain. Residues 41–49 (LCNGKSNPI) and lysine 89 each bind ATP. The Proton acceptor role is filled by aspartate 185.

This sequence belongs to the protein kinase superfamily. Ser/Thr protein kinase family. ZRK subfamily.

It catalyses the reaction L-seryl-[protein] + ATP = O-phospho-L-seryl-[protein] + ADP + H(+). The enzyme catalyses L-threonyl-[protein] + ATP = O-phospho-L-threonyl-[protein] + ADP + H(+). In Arabidopsis thaliana (Mouse-ear cress), this protein is Serine/threonine-protein kinase ZRK4.